We begin with the raw amino-acid sequence, 456 residues long: NADH-quinone oxidoreductase subunit N (456 aa).

Transmembrane regions (helical) follow at residues 6 to 26 (LFAL…MLLA), 45 to 65 (VAAL…GALF), 75 to 95 (TAYA…AGVA), 97 to 117 (EAPA…GAGH), 118 to 138 (AATL…LFAF), 151 to 171 (FLVM…LIYA), 181 to 201 (WVGH…GLAF), 220 to 240 (PAGA…IAIL), 252 to 272 (LWSA…NVLA), 281 to 301 (MLGY…ASGA), 308 to 328 (VLFY…ASAM), 355 to 375 (GLLS…LYLF), 382 to 402 (ESWI…YYYI), and 426 to 446 (LLLI…LVLI).

It belongs to the complex I subunit 2 family. In terms of assembly, NDH-1 is composed of 14 different subunits. Subunits NuoA, H, J, K, L, M, N constitute the membrane sector of the complex.

Its subcellular location is the cell inner membrane. It catalyses the reaction a quinone + NADH + 5 H(+)(in) = a quinol + NAD(+) + 4 H(+)(out). In terms of biological role, NDH-1 shuttles electrons from NADH, via FMN and iron-sulfur (Fe-S) centers, to quinones in the respiratory chain. The immediate electron acceptor for the enzyme in this species is believed to be ubiquinone. Couples the redox reaction to proton translocation (for every two electrons transferred, four hydrogen ions are translocated across the cytoplasmic membrane), and thus conserves the redox energy in a proton gradient. This chain is NADH-quinone oxidoreductase subunit N, found in Rhodopseudomonas palustris (strain BisA53).